Here is a 382-residue protein sequence, read N- to C-terminus: Chaperone protein DnaJ (382 aa).

The J domain occupies 5–69 (DLYGVLGVAK…QKRANYDQSG (65 aa)). A disordered region spans residues 104–123 (QFFGGGGGQRNPNAPRPGRD). Residues 138–220 (GKKTKIKYNR…CGGSGHEEER (83 aa)) form a CR-type zinc finger. Zn(2+) is bound by residues Cys151, Cys154, Cys168, Cys171, Cys194, Cys197, Cys208, and Cys211. CXXCXGXG motif repeat units follow at residues 151-158 (CHTCGGNG), 168-175 (CHQCGGSG), 194-201 (CPVCHGTG), and 208-215 (CPTCGGSG). Residues 358–382 (ASGESVTGSGKGNLFNKMRDKFNEN) form a disordered region.

This sequence belongs to the DnaJ family. Homodimer. The cofactor is Zn(2+).

Its subcellular location is the cytoplasm. Its function is as follows. Participates actively in the response to hyperosmotic and heat shock by preventing the aggregation of stress-denatured proteins and by disaggregating proteins, also in an autonomous, DnaK-independent fashion. Unfolded proteins bind initially to DnaJ; upon interaction with the DnaJ-bound protein, DnaK hydrolyzes its bound ATP, resulting in the formation of a stable complex. GrpE releases ADP from DnaK; ATP binding to DnaK triggers the release of the substrate protein, thus completing the reaction cycle. Several rounds of ATP-dependent interactions between DnaJ, DnaK and GrpE are required for fully efficient folding. Also involved, together with DnaK and GrpE, in the DNA replication of plasmids through activation of initiation proteins. The sequence is that of Chaperone protein DnaJ from Levilactobacillus brevis (strain ATCC 367 / BCRC 12310 / CIP 105137 / JCM 1170 / LMG 11437 / NCIMB 947 / NCTC 947) (Lactobacillus brevis).